The sequence spans 344 residues: Geranylgeranyl transferase type-2 subunit alpha (344 aa).

PFTA repeat units follow at residues 44-78, 89-123, 125-159, 165-199, 214-248, and 266-293; these read YSEGNLKLTTELLDWNPETYSVWNYRREILLNDVF, LLDNELKYVLSKMKVFPKVYWIFNHRRWCLENAPY, NWNYEMMITEKLLSADARNFHGWHYRRYVVSQIER, LAKKEMEYTTSAIATNFSNFSALHNRTKLIETILN, ILEQELDMIHQAVFTDPDDSSVWIYHRWLMGHCNP, and YLQKEIELIQELHEMEPENRWCCESLVN.

Belongs to the protein prenyltransferase subunit alpha family. Heterodimer of an alpha and a beta subunit.

It catalyses the reaction geranylgeranyl diphosphate + L-cysteinyl-[protein] = S-geranylgeranyl-L-cysteinyl-[protein] + diphosphate. Its function is as follows. Catalyzes the transfer of a geranyl-geranyl moiety from geranyl-geranyl pyrophosphate to proteins having the C-terminal-XCC or -XCXC, where both cysteines may become modified. In Schizosaccharomyces pombe (strain 972 / ATCC 24843) (Fission yeast), this protein is Geranylgeranyl transferase type-2 subunit alpha (bet4).